A 301-amino-acid polypeptide reads, in one-letter code: 4-hydroxy-tetrahydrodipicolinate synthase (301 aa).

T53 contacts pyruvate. The active-site Proton donor/acceptor is the Y142. Catalysis depends on K170, which acts as the Schiff-base intermediate with substrate. Residue V212 coordinates pyruvate.

This sequence belongs to the DapA family. In terms of assembly, homotetramer; dimer of dimers.

It localises to the cytoplasm. It catalyses the reaction L-aspartate 4-semialdehyde + pyruvate = (2S,4S)-4-hydroxy-2,3,4,5-tetrahydrodipicolinate + H2O + H(+). It functions in the pathway amino-acid biosynthesis; L-lysine biosynthesis via DAP pathway; (S)-tetrahydrodipicolinate from L-aspartate: step 3/4. Its function is as follows. Catalyzes the condensation of (S)-aspartate-beta-semialdehyde [(S)-ASA] and pyruvate to 4-hydroxy-tetrahydrodipicolinate (HTPA). The protein is 4-hydroxy-tetrahydrodipicolinate synthase of Synechocystis sp. (strain ATCC 27184 / PCC 6803 / Kazusa).